The sequence spans 325 residues: Undecaprenyl-phosphate 4-deoxy-4-formamido-L-arabinose transferase (325 aa).

The next 2 helical transmembrane spans lie at 235–255 and 269–291; these read LSVV…LLMV and VFTL…GLLG.

Belongs to the glycosyltransferase 2 family.

Its subcellular location is the cell inner membrane. The catalysed reaction is UDP-4-deoxy-4-formamido-beta-L-arabinose + di-trans,octa-cis-undecaprenyl phosphate = 4-deoxy-4-formamido-alpha-L-arabinopyranosyl di-trans,octa-cis-undecaprenyl phosphate + UDP. The protein operates within glycolipid biosynthesis; 4-amino-4-deoxy-alpha-L-arabinose undecaprenyl phosphate biosynthesis; 4-amino-4-deoxy-alpha-L-arabinose undecaprenyl phosphate from UDP-4-deoxy-4-formamido-beta-L-arabinose and undecaprenyl phosphate: step 1/2. It functions in the pathway bacterial outer membrane biogenesis; lipopolysaccharide biosynthesis. In terms of biological role, catalyzes the transfer of 4-deoxy-4-formamido-L-arabinose from UDP to undecaprenyl phosphate. The modified arabinose is attached to lipid A and is required for resistance to polymyxin and cationic antimicrobial peptides. Essential for virulence in insects. The sequence is that of Undecaprenyl-phosphate 4-deoxy-4-formamido-L-arabinose transferase from Photorhabdus laumondii subsp. laumondii (strain DSM 15139 / CIP 105565 / TT01) (Photorhabdus luminescens subsp. laumondii).